A 142-amino-acid polypeptide reads, in one-letter code: Transcriptional regulator MraZ (142 aa).

2 SpoVT-AbrB domains span residues A5–E51 and A77–T120.

The protein belongs to the MraZ family. As to quaternary structure, forms oligomers.

The protein resides in the cytoplasm. The protein localises to the nucleoid. This chain is Transcriptional regulator MraZ, found in Acidovorax ebreus (strain TPSY) (Diaphorobacter sp. (strain TPSY)).